The primary structure comprises 526 residues: Dolichyl pyrophosphate Glc1Man9GlcNAc2 alpha-1,3-glucosyltransferase (526 aa).

The next 11 helical transmembrane spans lie at 4 to 24 (FGIATGGSNWFSALALGVTLL), 103 to 122 (LLFQRFSVIFTDALFVYAVH), 143 to 163 (FILSALLLWNFGLLIVDHIHF), 188 to 208 (GAFLFAVLLHFKHIYLYVAPA), 238 to 258 (LISLGLIVFLVSALSLGPFLA), 334 to 354 (PLATFICTLIAMLPSVFCLWC), 368 to 388 (LCALSSFMFGWHVHEKAILLA), 389 to 409 (VLPMSLLSVGKAVDASIFLIL), 427 to 449 (LPIKIILMLLFTIYSISSLKTLF), 461 to 481 (TFYLLGLGPLEVFCEFVFPFT), and 488 to 508 (PFIPLLLTSVYCAVGITYAWL).

Belongs to the ALG6/ALG8 glucosyltransferase family.

Its subcellular location is the endoplasmic reticulum membrane. It carries out the reaction an alpha-D-Glc-(1-&gt;3)-alpha-D-Man-(1-&gt;2)-alpha-D-Man-(1-&gt;2)-alpha-D-Man-(1-&gt;3)-[alpha-D-Man-(1-&gt;2)-alpha-D-Man-(1-&gt;3)-[alpha-D-Man-(1-&gt;2)-alpha-D-Man-(1-&gt;6)]-alpha-D-Man-(1-&gt;6)]-beta-D-Man-(1-&gt;4)-beta-D-GlcNAc-(1-&gt;4)-alpha-D-GlcNAc-diphospho-di-trans,poly-cis-dolichol + a di-trans,poly-cis-dolichyl beta-D-glucosyl phosphate = an alpha-D-Glc-(1-&gt;3)-alpha-D-Glc-(1-&gt;3)-alpha-D-Man-(1-&gt;2)-alpha-D-Man-(1-&gt;2)-alpha-D-Man-(1-&gt;3)-[alpha-D-Man-(1-&gt;2)-alpha-D-Man-(1-&gt;3)-[alpha-D-Man-(1-&gt;2)-alpha-D-Man-(1-&gt;6)]-alpha-D-Man-(1-&gt;6)]-beta-D-Man-(1-&gt;4)-beta-D-GlcNAc-(1-&gt;4)-alpha-D-GlcNAc-diphospho-di-trans,poly-cis-dolichol + a di-trans,poly-cis-dolichyl phosphate + H(+). It functions in the pathway protein modification; protein glycosylation. Functionally, dolichyl pyrophosphate Glc1Man9GlcNAc2 alpha-1,3-glucosyltransferase that operates in the biosynthetic pathway of dolichol-linked oligosaccharides, the glycan precursors employed in protein asparagine (N)-glycosylation. The assembly of dolichol-linked oligosaccharides begins on the cytosolic side of the endoplasmic reticulum membrane and finishes in its lumen. The sequential addition of sugars to dolichol pyrophosphate produces dolichol-linked oligosaccharides containing fourteen sugars, including two GlcNAcs, nine mannoses and three glucoses. Once assembled, the oligosaccharide is transferred from the lipid to nascent proteins by oligosaccharyltransferases. In the lumen of the endoplasmic reticulum, adds the second glucose residue from dolichyl phosphate glucose (Dol-P-Glc) onto the lipid-linked oligosaccharide intermediate Glc(1)Man(9)GlcNAc(2)-PP-Dol to produce Glc(2)Man(9)GlcNAc(2)-PP-Dol. Glc(2)Man(9)GlcNAc(2)-PP-Dol is a substrate for ALG10, the following enzyme in the biosynthetic pathway. Required for PKD1/Polycystin-1 maturation and localization to the plasma membrane of the primary cilia. The chain is Dolichyl pyrophosphate Glc1Man9GlcNAc2 alpha-1,3-glucosyltransferase from Bos taurus (Bovine).